The sequence spans 136 residues: Phosphoribosyl-AMP cyclohydrolase (136 aa).

Asp-89 contributes to the Mg(2+) binding site. Residue Cys-90 participates in Zn(2+) binding. Residues Asp-91 and Asp-93 each contribute to the Mg(2+) site. Residues Cys-106 and Cys-113 each coordinate Zn(2+).

It belongs to the PRA-CH family. Homodimer. It depends on Mg(2+) as a cofactor. Zn(2+) serves as cofactor.

It is found in the cytoplasm. The enzyme catalyses 1-(5-phospho-beta-D-ribosyl)-5'-AMP + H2O = 1-(5-phospho-beta-D-ribosyl)-5-[(5-phospho-beta-D-ribosylamino)methylideneamino]imidazole-4-carboxamide. The protein operates within amino-acid biosynthesis; L-histidine biosynthesis; L-histidine from 5-phospho-alpha-D-ribose 1-diphosphate: step 3/9. In terms of biological role, catalyzes the hydrolysis of the adenine ring of phosphoribosyl-AMP. In Bifidobacterium longum subsp. infantis (strain ATCC 15697 / DSM 20088 / JCM 1222 / NCTC 11817 / S12), this protein is Phosphoribosyl-AMP cyclohydrolase.